Here is a 239-residue protein sequence, read N- to C-terminus: Ribosomal RNA small subunit methyltransferase G (239 aa).

Residues Gly-77, Phe-82, 128–129 (AE), and Arg-147 contribute to the S-adenosyl-L-methionine site. A disordered region spans residues 219-239 (RKTPKKYPRKPGTPNKLPIEK).

It belongs to the methyltransferase superfamily. RNA methyltransferase RsmG family.

Its subcellular location is the cytoplasm. In terms of biological role, specifically methylates the N7 position of guanine in position 535 of 16S rRNA. This is Ribosomal RNA small subunit methyltransferase G from Bacillus cytotoxicus (strain DSM 22905 / CIP 110041 / 391-98 / NVH 391-98).